A 137-amino-acid chain; its full sequence is Putative pre-16S rRNA nuclease (137 aa).

Belongs to the YqgF nuclease family.

Its subcellular location is the cytoplasm. In terms of biological role, could be a nuclease involved in processing of the 5'-end of pre-16S rRNA. This is Putative pre-16S rRNA nuclease from Flavobacterium psychrophilum (strain ATCC 49511 / DSM 21280 / CIP 103535 / JIP02/86).